Consider the following 310-residue polypeptide: Pseudouridine-5'-phosphate glycosidase (310 aa).

E26 (proton donor) is an active-site residue. Substrate-binding residues include K87 and V107. D139 provides a ligand contact to Mn(2+). 141-143 (SAD) contacts substrate. K160 acts as the Nucleophile in catalysis.

The protein belongs to the pseudouridine-5'-phosphate glycosidase family. In terms of assembly, homotrimer. The cofactor is Mn(2+).

It catalyses the reaction D-ribose 5-phosphate + uracil = psi-UMP + H2O. In terms of biological role, catalyzes the reversible cleavage of pseudouridine 5'-phosphate (PsiMP) to ribose 5-phosphate and uracil. Functions biologically in the cleavage direction, as part of a pseudouridine degradation pathway. This Roseobacter denitrificans (strain ATCC 33942 / OCh 114) (Erythrobacter sp. (strain OCh 114)) protein is Pseudouridine-5'-phosphate glycosidase.